Consider the following 257-residue polypeptide: Phosphomannomutase (257 aa).

D19 functions as the Nucleophile in the catalytic mechanism. Mg(2+) is bound by residues D19 and D21. The active-site Proton donor/acceptor is D21. Alpha-D-mannose 1-phosphate is bound by residues R28, R133, R144, R151, S189, and D191. Mg(2+) is bound by residues D219, F231, D233, and T236.

The protein belongs to the eukaryotic PMM family. In terms of assembly, homodimer.

It is found in the cytoplasm. It catalyses the reaction alpha-D-mannose 1-phosphate = D-mannose 6-phosphate. Its pathway is nucleotide-sugar biosynthesis; GDP-alpha-D-mannose biosynthesis; alpha-D-mannose 1-phosphate from D-fructose 6-phosphate: step 2/2. Involved in the synthesis of the GDP-mannose and dolichol-phosphate-mannose required for a number of critical mannosyl transfer reactions. In Schizosaccharomyces pombe (strain 972 / ATCC 24843) (Fission yeast), this protein is Phosphomannomutase (pmm1).